The following is a 105-amino-acid chain: Replication restart protein PriB (105 aa).

Positions 1-102 constitute an SSB domain; it reads MTANRLTLSG…LHAEQIELID (102 aa).

Belongs to the PriB family. Homodimer. Interacts with PriA and DnaT. Component of the replication restart primosome. Primosome assembly occurs via a 'hand-off' mechanism. PriA binds to replication forks, subsequently PriB then DnaT bind; DnaT then displaces ssDNA to generate the helicase loading substrate.

In terms of biological role, involved in the restart of stalled replication forks, which reloads the replicative helicase on sites other than the origin of replication; the PriA-PriB pathway is the major replication restart pathway. During primosome assembly it facilitates complex formation between PriA and DnaT on DNA; stabilizes PriA on DNA. Stimulates the DNA unwinding activity of PriA helicase. This chain is Replication restart protein PriB, found in Erwinia tasmaniensis (strain DSM 17950 / CFBP 7177 / CIP 109463 / NCPPB 4357 / Et1/99).